The following is a 333-amino-acid chain: MSAAVSRHISVLGREAVEFLAPRAGGIYVDATFGAGGYSRRILAVAGARVIGIDRDRTAIAEAFDLVEQAEGRLTLVQDRFSQLDEVCASQNAPQVDGIVMDIGVSSMQLDRAERGFSFRQDGPLDMRMGQEGASAADVVAVASEKDLANIIYIFGEERHSRAVARAIVRARQEKPILTTKVLADIVASVVHTRPNDIHPATRTFQALRIFVNEELDELQSALHASERTLKPGGRLVVVTFHSLEDRIVKNFINARASRGGGSRHMPDVERTAPSFEILTKRPVVADENEIAANPRARSAKLRAAERTANASHDADTSFDWPTLRTVMKGGRA.

S-adenosyl-L-methionine contacts are provided by residues 36–38, aspartate 54, phenylalanine 81, aspartate 102, and glutamine 109; that span reads GGY.

It belongs to the methyltransferase superfamily. RsmH family.

The protein localises to the cytoplasm. The catalysed reaction is cytidine(1402) in 16S rRNA + S-adenosyl-L-methionine = N(4)-methylcytidine(1402) in 16S rRNA + S-adenosyl-L-homocysteine + H(+). Functionally, specifically methylates the N4 position of cytidine in position 1402 (C1402) of 16S rRNA. The polypeptide is Ribosomal RNA small subunit methyltransferase H (Afipia carboxidovorans (strain ATCC 49405 / DSM 1227 / KCTC 32145 / OM5) (Oligotropha carboxidovorans)).